A 593-amino-acid polypeptide reads, in one-letter code: Copine-5 (593 aa).

The C2 1 domain maps to 2-134; it reads EQPEDMASLS…SSGSRLEKPL (133 aa). Ser-19 carries the phosphoserine modification. Ca(2+)-binding residues include Asp-38, Asp-44, Asp-98, Asp-100, Ser-103, Lys-108, and Asp-110. Ser-103 bears the Phosphoserine mark. Phosphoserine is present on Ser-140. The region spanning 161–284 is the C2 2 domain; that stretch reads KCGTIILSAE…ARGQSQFNIY (124 aa). Residues Asp-192, Asp-198, Asp-254, Asp-256, and Asp-262 each contribute to the Ca(2+) site. The 227-residue stretch at 328–554 folds into the VWFA domain; it reads NFTVAIDFTA…DVLAEIPDQL (227 aa). A disordered region spans residues 562–593; the sequence is GIRPRPPPAAPAQSPPQSPAHSPPGSPVHTHI. A compositionally biased stretch (pro residues) spans 565–587; the sequence is PRPPPAAPAQSPPQSPAHSPPGS.

This sequence belongs to the copine family. Requires Ca(2+) as cofactor. Expressed in the cerebra and cerebellum of newborn brain. Expressed in the eye, lung and muscles but weakly expressed in the adult brain (at protein level).

The protein localises to the perikaryon. The protein resides in the cell projection. Functionally, probable calcium-dependent phospholipid-binding protein that may play a role in calcium-mediated intracellular processes. Plays a role in dendrite formation by melanocytes. This is Copine-5 from Mus musculus (Mouse).